The chain runs to 853 residues: Dynamin-A (853 aa).

Residues 22 to 296 (PLDLPQIVVV…LMFHIRDTLP (275 aa)) enclose the Dynamin-type G domain. Residues 32–39 (GSQSSGKS) form a G1 motif region. 32-40 (GSQSSGKSS) serves as a coordination point for GTP. Positions 58–60 (VTR) are G2 motif. The interval 138–141 (DLPG) is G3 motif. Residues 207–210 (TKLD) form a G4 motif region. GTP contacts are provided by residues 207-213 (TKLDLMD) and 238-241 (NRSQ). A G5 motif region spans residues 237–240 (INRS). Composition is skewed to low complexity over residues 523–569 (DQYQ…QQNQ) and 590–607 (PAQQQPNQQPNQLNKGPQ). Residues 523–738 (DQYQQQQQQQ…RYQDDFYGRG (216 aa)) form a disordered region. The span at 610-624 (PPNQSKPSSIPQNGP) shows a compositional bias: polar residues. 2 stretches are compositionally biased toward low complexity: residues 625 to 635 (NNNNNNNNNNN) and 664 to 728 (NNSN…SSYN). One can recognise a GED domain in the interval 762–853 (TELIRELLIS…IINEIRDFRN (92 aa)).

It belongs to the TRAFAC class dynamin-like GTPase superfamily. Dynamin/Fzo/YdjA family.

It is found in the cytoplasm. Function in membrane trafficking processes along the endo-lysosomal pathway. This chain is Dynamin-A (dymA), found in Dictyostelium discoideum (Social amoeba).